Reading from the N-terminus, the 980-residue chain is Zinc finger BED domain-containing protein 6 (980 aa).

Residues 1-89 (MSVCTLSVPV…ILAKKFSKDL (89 aa)) form a required for nucleolar localization region. Residues 89 to 109 (LGSGRPVADAPASLASGAPEQ) are disordered. The segment at 130 to 187 (AKTSIVWHFFHVDPQYTWRAICNLCEKSVSRGKPGSHLGTSTLQRHLQARHSPHWTRA) adopts a BED-type 1 zinc-finger fold. Residues Cys151, Cys154, His175, and His180 each coordinate Zn(2+). The segment at 201 to 239 (LDLSLSPPSPGSNGSFEYIPTDSVDENRMGKKRDKSASD) is disordered. A compositionally biased stretch (low complexity) spans 203 to 215 (LSLSPPSPGSNGS). The BED-type 2 zinc finger occupies 265–322 (AKTSAVWNFFYTDPQHISRAVCNICKRSVSRGRPGSHLGTSTLQRHLQATHPIHWAVA). Positions 286, 289, 310, and 315 each coordinate Zn(2+). The tract at residues 328-397 (AIGNGLDETE…ADQDNPVHAQ (70 aa)) is disordered. The span at 360 to 373 (TAEDLSDSDTDEPP) shows a compositional bias: acidic residues. Ser383 carries the post-translational modification Phosphoserine. Positions 868 to 950 (VVDEYFKEKY…EQLIFLKMNL (83 aa)) are HATC (Hobo-Ac-Tam3) domain.

Expressed in pancreatic islet cells and weakly expressed in surrounding exocrine tissues (at protein level). Expressed in muscle and brain (at protein level). Shows broad tissue distribution with expression detected in brain, stomach, intestine, heart, kidney, liver, lung, skeletal muscle, ovary, spleen, tail and testis.

Its subcellular location is the nucleus. The protein localises to the nucleolus. It localises to the cytoplasm. Its function is as follows. Transcriptional repressor which binds to the consensus sequence 5'-GCTCGC-3', transcription regulation may be tissue-specific. Regulates the expression of target genes such as: IGF2, PGAP6/TMEM8, ENHO, and PIANP. Acts as a transcriptional repressor of growth factor IGF2, thereby negatively regulating postnatal growth of muscles and internal organs, especially in females. Negatively regulates myoblast differentiation and myoblast mitochondrial activity via its regulation of IGF2 transcription. Negatively regulates the cell cycle of myoblasts, potentially via transcriptional regulation of the E2F family of transcription factors such as: E2F1 and E2F2. Positively regulates the cell cycle and survival of pancreatic beta cells. Binds to the CDH2 gene and may directly repress CDH2 transcription. Probably by controlling CDH2 expression, regulates pancreatic beta cell adhesion, and formation of cell-to-cell junctions between pancreatic beta cells and neural crest stem cells. May also play a role in embryonic beta cell differentiation. May play a role in insulin sensitivity and glucose clearance. This is Zinc finger BED domain-containing protein 6 from Mus musculus (Mouse).